The following is a 225-amino-acid chain: Uracil-DNA glycosylase (225 aa).

Residue Asp-65 is the Proton acceptor of the active site.

The protein belongs to the uracil-DNA glycosylase (UDG) superfamily. UNG family.

Its subcellular location is the cytoplasm. The enzyme catalyses Hydrolyzes single-stranded DNA or mismatched double-stranded DNA and polynucleotides, releasing free uracil.. Functionally, excises uracil residues from the DNA which can arise as a result of misincorporation of dUMP residues by DNA polymerase or due to deamination of cytosine. This chain is Uracil-DNA glycosylase, found in Bacillus cereus (strain AH187).